The primary structure comprises 373 residues: Enoyl-[acyl-carrier-protein] reductase, mitochondrial (373 aa).

A mitochondrion-targeting transit peptide spans 1 to 53; the sequence is MWVCGALCRTRAPAQLGQRLLPESRRRRPASASFSASAEPSRVRALVYGHHGD. Lys-61 carries the post-translational modification N6-acetyllysine; alternate. Residue Lys-61 is modified to N6-succinyllysine; alternate. The Proton donor role is filled by Tyr-94. NADP(+) contacts are provided by residues Asn-167, 193–196, and 216–218; these read NSGV and RDT. 2 positions are modified to N6-acetyllysine; alternate: Lys-252 and Lys-267. N6-succinyllysine; alternate is present on residues Lys-252 and Lys-267. Residues 285–288 and 310–312 contribute to the NADP(+) site; these read YGGM and FWL. Lys-316 is subject to N6-succinyllysine. Residue Lys-368 coordinates NADP(+).

It belongs to the zinc-containing alcohol dehydrogenase family. Quinone oxidoreductase subfamily. Homodimer.

Its subcellular location is the mitochondrion. The enzyme catalyses a 2,3-saturated acyl-[ACP] + NADP(+) = a (2E)-enoyl-[ACP] + NADPH + H(+). It carries out the reaction (2E)-butenoyl-[ACP] + NADPH + H(+) = butanoyl-[ACP] + NADP(+). The catalysed reaction is (2E)-hexenoyl-[ACP] + NADPH + H(+) = hexanoyl-[ACP] + NADP(+). It catalyses the reaction (2E)-octenoyl-[ACP] + NADPH + H(+) = octanoyl-[ACP] + NADP(+). The enzyme catalyses (2E)-decenoyl-[ACP] + NADPH + H(+) = decanoyl-[ACP] + NADP(+). It carries out the reaction (2E)-dodecenoyl-[ACP] + NADPH + H(+) = dodecanoyl-[ACP] + NADP(+). The catalysed reaction is (2E)-tetradecenoyl-[ACP] + NADPH + H(+) = tetradecanoyl-[ACP] + NADP(+). It catalyses the reaction (2E)-hexadecenoyl-[ACP] + NADPH + H(+) = hexadecanoyl-[ACP] + NADP(+). Its function is as follows. Catalyzes the NADPH-dependent reduction of trans-2-enoyl thioesters in mitochondrial fatty acid synthesis (fatty acid synthesis type II). Fatty acid chain elongation in mitochondria uses acyl carrier protein (ACP) as an acyl group carrier, but the enzyme accepts both ACP and CoA thioesters as substrates in vitro. Displays a preference for medium-chain over short- and long-chain substrates. May provide the octanoyl chain used for lipoic acid biosynthesis, regulating protein lipoylation and mitochondrial respiratory activity particularly in Purkinje cells. Involved in iron homeostasis; affecting Fe-S cluster assembly and ceramide metabolism. Required for proper morphology and bioenergetic functions of mitochondria. Required for maintenance of neurons. The sequence is that of Enoyl-[acyl-carrier-protein] reductase, mitochondrial (MECR) from Bos taurus (Bovine).